The following is a 70-amino-acid chain: Large ribosomal subunit protein bL31 (70 aa).

Positions 16, 18, 37, and 40 each coordinate Zn(2+).

It belongs to the bacterial ribosomal protein bL31 family. Type A subfamily. Part of the 50S ribosomal subunit. The cofactor is Zn(2+).

Binds the 23S rRNA. The chain is Large ribosomal subunit protein bL31 from Actinobacillus pleuropneumoniae serotype 5b (strain L20).